The sequence spans 473 residues: Vasculin (473 aa).

3 disordered regions span residues 1 to 25 (MAQH…SSLN), 44 to 170 (RRRH…SRTP), and 186 to 341 (SGFP…HQER). Serine 49 is modified (phosphoserine). At arginine 87 the chain carries Omega-N-methylarginine. Residues 94-117 (NSRSRSSIFHSGKSQGLHENSIPD) are compositionally biased toward polar residues. Basic and acidic residues predominate over residues 119–133 (ETGRKEDKRERRQFE). Polar residues-rich tracts occupy residues 193–204 (NLQSQPVKNGTG) and 248–286 (NFNT…QQPR). Residues serine 274, serine 276, serine 322, and serine 381 each carry the phosphoserine modification. Basic and acidic residues predominate over residues 293-329 (MRSDKKSEFLKALKRDRVEEEHEDESHAGSEKDDDSF). The interval 450–473 (TFKPTIENDDTETSSSDTSDDDDV) is disordered. The segment covering 456–473 (ENDDTETSSSDTSDDDDV) has biased composition (acidic residues).

The protein belongs to the vasculin family. In terms of assembly, interacts with GTF2B, GTF2F2, RNA polymerase II and TBP. As to expression, ubiquitously expressed (at protein level).

The protein localises to the nucleus. In terms of biological role, functions as a GC-rich promoter-specific transactivating transcription factor. In Mus musculus (Mouse), this protein is Vasculin (Gpbp1).